A 245-amino-acid chain; its full sequence is Ribonuclease P protein component 3 (245 aa).

The protein belongs to the eukaryotic/archaeal RNase P protein component 3 family. In terms of assembly, consists of a catalytic RNA component and at least 4-5 protein subunits.

The protein localises to the cytoplasm. It catalyses the reaction Endonucleolytic cleavage of RNA, removing 5'-extranucleotides from tRNA precursor.. Part of ribonuclease P, a protein complex that generates mature tRNA molecules by cleaving their 5'-ends. This chain is Ribonuclease P protein component 3, found in Methanothermobacter thermautotrophicus (strain ATCC 29096 / DSM 1053 / JCM 10044 / NBRC 100330 / Delta H) (Methanobacterium thermoautotrophicum).